Consider the following 152-residue polypeptide: Clitocypin-2 (152 aa).

It belongs to the protease inhibitor I48 family. In terms of assembly, homodimer. Expressed in all analyzed tissues, but expression was higher in the pileus and in the lower part of the stipe.

In terms of biological role, binds and inhibits cysteine proteinases. Inhibits most strongly papain and cathepsin L, more weakly bromelain and cathepsin B while it is completely ineffective against cathepsin H. The polypeptide is Clitocypin-2 (clt2) (Clitocybe nebularis (Clouded agaric)).